Reading from the N-terminus, the 277-residue chain is Protein CUSTOS (277 aa).

Disordered regions lie at residues 1-81, 108-182, and 238-277; these read MVAP…QTTP, TQQA…QRCR, and SVNG…EPKN. Positions 9–18 are enriched in low complexity; the sequence is SDSESSSSDS. Ser-62 is modified (phosphoserine). Residues 63 to 72 show a composition bias toward basic and acidic residues; sequence RRREVNQHDE. Thr-80 carries the phosphothreonine modification. The stretch at 106-141 forms a coiled coil; sequence KKTQQARLQQEAKEQQEAKEQQAAKEEQAAKKEEDG. Over residues 115 to 142 the composition is skewed to basic and acidic residues; that stretch reads QEAKEQQEAKEQQAAKEEQAAKKEEDGF. Ser-158 and Ser-238 each carry phosphoserine. Residues 248–258 show a composition bias toward basic residues; sequence TKKKKKKKAKK. A Nucleolar localization signal (NLS) motif is present at residues 249 to 256; that stretch reads KKKKKKKA. The segment covering 265–277 has biased composition (low complexity); sequence CPPAECAAAEPKN.

This sequence belongs to the CUSTOS family.

It localises to the nucleus envelope. Its function is as follows. Plays a role in the regulation of Wnt signaling pathway during early development. In Rattus norvegicus (Rat), this protein is Protein CUSTOS.